A 319-amino-acid polypeptide reads, in one-letter code: Ninja-family protein AFP4 (319 aa).

The span at 39 to 54 (DSEHGENQQEAKKRED) shows a compositional bias: basic and acidic residues. Disordered stretches follow at residues 39 to 63 (DSEH…EKDV), 99 to 120 (FVFD…IVGR), and 205 to 228 (VTGP…NVEN).

This sequence belongs to the Ninja family. Interacts with ABI5/DPBF1, AREB3/DPBF3, EEL/DPBF4, ABF1 and ABF3/DPBF5. As to expression, predominantly expressed in roots and seedlings.

The protein resides in the nucleus. In terms of biological role, acts as a negative regulator of abscisic acid (ABA) and salinity responses. The protein is Ninja-family protein AFP4 (AFP4) of Arabidopsis thaliana (Mouse-ear cress).